Reading from the N-terminus, the 167-residue chain is MELWLTGTILKPKGLKGELKVQPVTDFPDRFLSRTKYFAGRQPETVVPVNVKSATLSQGFAWLFFEGVDSREKAQEMAGMHLYIEEKECAPRPQNRAWLHELEGMRVKGRDGVEVGVLTAILPMPAHEVYEVRTGNGTVLIPAIDEFIDEISLEGGYIVVPRFDEFL.

In terms of domain architecture, PRC barrel spans 94-166; sequence QNRAWLHELE…YIVVPRFDEF (73 aa).

It belongs to the RimM family. As to quaternary structure, binds ribosomal protein uS19.

Its subcellular location is the cytoplasm. An accessory protein needed during the final step in the assembly of 30S ribosomal subunit, possibly for assembly of the head region. Essential for efficient processing of 16S rRNA. May be needed both before and after RbfA during the maturation of 16S rRNA. It has affinity for free ribosomal 30S subunits but not for 70S ribosomes. This is Ribosome maturation factor RimM from Chlorobium phaeovibrioides (strain DSM 265 / 1930) (Prosthecochloris vibrioformis (strain DSM 265)).